The following is a 162-amino-acid chain: Ribonuclease (162 aa).

A signal peptide spans 1–29 (MKKISSVFTMFALIAAILFSGFIPQQAYA). A propeptide spanning residues 30-53 (ETTLTPTATNKTASIQLTSDVHTL) is cleaved from the precursor. The active-site Proton acceptor is the glutamate 125. Catalysis depends on histidine 154, which acts as the Proton donor.

It belongs to the ribonuclease N1/T1 family.

Its subcellular location is the secreted. Its function is as follows. This is a purine-specific ribonuclease. The polypeptide is Ribonuclease (Bacillus pumilus (Bacillus mesentericus)).